A 130-amino-acid polypeptide reads, in one-letter code: Small ribosomal subunit protein uS9 (130 aa).

It belongs to the universal ribosomal protein uS9 family.

This is Small ribosomal subunit protein uS9 from Pseudoalteromonas atlantica (strain T6c / ATCC BAA-1087).